A 237-amino-acid chain; its full sequence is UPF0502 protein HEAR1280 (237 aa).

Over residues 1-13 (MNTEVMHSTSTES) the composition is skewed to polar residues. The disordered stretch occupies residues 1 to 21 (MNTEVMHSTSTESDAQEKPQA).

Belongs to the UPF0502 family.

This chain is UPF0502 protein HEAR1280, found in Herminiimonas arsenicoxydans.